A 373-amino-acid polypeptide reads, in one-letter code: 4-hydroxy-3-methylbut-2-en-1-yl diphosphate synthase (flavodoxin) (373 aa).

[4Fe-4S] cluster contacts are provided by cysteine 269, cysteine 272, cysteine 304, and glutamate 311.

This sequence belongs to the IspG family. It depends on [4Fe-4S] cluster as a cofactor.

The enzyme catalyses (2E)-4-hydroxy-3-methylbut-2-enyl diphosphate + oxidized [flavodoxin] + H2O + 2 H(+) = 2-C-methyl-D-erythritol 2,4-cyclic diphosphate + reduced [flavodoxin]. The protein operates within isoprenoid biosynthesis; isopentenyl diphosphate biosynthesis via DXP pathway; isopentenyl diphosphate from 1-deoxy-D-xylulose 5-phosphate: step 5/6. Converts 2C-methyl-D-erythritol 2,4-cyclodiphosphate (ME-2,4cPP) into 1-hydroxy-2-methyl-2-(E)-butenyl 4-diphosphate. This is 4-hydroxy-3-methylbut-2-en-1-yl diphosphate synthase (flavodoxin) from Baumannia cicadellinicola subsp. Homalodisca coagulata.